The chain runs to 662 residues: Glutathione hydrolase 7 (662 aa).

The Cytoplasmic portion of the chain corresponds to 1–106 (MAAENEASQE…AAECSCRQDG (106 aa)). Residues serine 17, serine 72, serine 79, and serine 83 each carry the phosphoserine modification. Residues 26 to 90 (SFPRLPEDEP…DGSPLRETRK (65 aa)) are disordered. The segment covering 72-83 (SSSSEMGSQDGS) has biased composition (low complexity). Residues 107–127 (LTVIVTACLTFATGVTVALVM) form a helical; Signal-anchor for type II membrane protein membrane-spanning segment. Residues 128–662 (QIYFGDPQIF…SLDATGASIL (535 aa)) lie on the Extracellular side of the membrane. N-linked (GlcNAc...) asparagine glycosylation is found at asparagine 198, asparagine 267, asparagine 283, asparagine 330, asparagine 353, asparagine 394, asparagine 519, asparagine 523, and asparagine 586.

Belongs to the gamma-glutamyltransferase family. Heterodimer composed of the light and heavy chains. The active site is located in the light chain. Post-translationally, cleaved by autocatalysis into a large and a small subunit and the autocatalytic cleavage is essential to the functional activation of the enzyme.

The protein resides in the membrane. It catalyses the reaction an N-terminal (5-L-glutamyl)-[peptide] + an alpha-amino acid = 5-L-glutamyl amino acid + an N-terminal L-alpha-aminoacyl-[peptide]. The enzyme catalyses glutathione + H2O = L-cysteinylglycine + L-glutamate. It carries out the reaction an S-substituted glutathione + H2O = an S-substituted L-cysteinylglycine + L-glutamate. The protein operates within sulfur metabolism; glutathione metabolism. Hydrolyzes and transfers gamma-glutamyl moieties from glutathione and other gamma-glutamyl compounds to acceptors. The sequence is that of Glutathione hydrolase 7 from Rattus norvegicus (Rat).